Consider the following 1826-residue polypeptide: 1,3-beta-glucan synthase component bgs3 (1826 aa).

Residues 34-43 show a composition bias toward polar residues; the sequence is QSNDQYNNIQ. The tract at residues 34–90 is disordered; sequence QSNDQYNNIQHPAPSFANPFIHEQDDSYSDILEEEPDEDAYDSPERPSSTEEFISQD. The span at 59–75 shows a compositional bias: acidic residues; the sequence is DSYSDILEEEPDEDAYD. A run of 7 helical transmembrane segments spans residues 427 to 447, 465 to 485, 504 to 524, 543 to 563, 597 to 617, 637 to 657, and 660 to 680; these read IWIL…PTIY, WCAP…ALIL, LIFV…IFGF, FFFS…FLLG, AALW…FLTL, FMIG…LVYL, and LVLF…MFSI. Serine 885 is subject to Phosphoserine. A run of 11 helical transmembrane segments spans residues 1272 to 1292, 1329 to 1349, 1375 to 1397, 1417 to 1437, 1438 to 1458, 1531 to 1551, 1571 to 1591, 1607 to 1627, 1642 to 1662, 1701 to 1721, and 1770 to 1790; these read VFIM…GAMY, IISI…HDLL, VTQN…YIAT, GSSI…TMTV, WTTH…CPFI, IFTE…AYTF, IWIM…ILLM, YGAV…VFTF, VLGC…VVVF, CKVV…CILF, and SLLF…PLVL.

The protein belongs to the glycosyltransferase 48 family. Component of the 1,3-beta-glucan synthase (GS) complex, composed of at least the alternate catalytic subunits bgs1, bgs2, bgs3, and bgs4, and a regulatory subunit chr4.

Its subcellular location is the membrane. It catalyses the reaction [(1-&gt;3)-beta-D-glucosyl](n) + UDP-alpha-D-glucose = [(1-&gt;3)-beta-D-glucosyl](n+1) + UDP + H(+). Functionally, alternate catalytic subunit of the 1,3-beta-glucan synthase (GS) complex. Synthesizes 1,3-beta-glucan, a major structural component of the yeast cell wall. Required for cell wall biosynthesis and cell elongation. The chain is 1,3-beta-glucan synthase component bgs3 from Schizosaccharomyces pombe (strain 972 / ATCC 24843) (Fission yeast).